The following is a 127-amino-acid chain: Trefoil factor 2 (127 aa).

The signal sequence occupies residues 1–21 (EPQRPAPGHPPPAGAVCLTGA). Q22 is subject to Pyrrolidone carboxylic acid. 2 consecutive P-type domains span residues 27 to 71 (CRCS…FKPL) and 77 to 120 (EECV…FFPM). 7 disulfide bridges follow: C27-C125, C29-C56, C40-C55, C50-C67, C79-C105, C89-C104, and C99-C116.

As to expression, found in pancreas.

The protein resides in the secreted. Functionally, inhibits gastrointestinal motility and gastric acid secretion. Could function as a structural component of gastric mucus, possibly by stabilizing glycoproteins in the mucus gel through interactions with carbohydrate side chains. The sequence is that of Trefoil factor 2 (TFF2) from Sus scrofa (Pig).